We begin with the raw amino-acid sequence, 663 residues long: MTSQNWKNCFNKKAIEVIEIHRSQETITVETVNNEDKIKNNISKPKIKVHKKPIIKSISKLKLQPKFSRYNDIIDYSIDFNCNKNYFLKQDKVSGNTFIHVFCEKRESKINLESDIENLKCLGKETIEARNNNKEIALFSTLKNQCLGLKIMHELISRNVMFIDDNGKDELLVKCLEEGRVDMVKYLITVDINLISKLKRICQITQLSLETLQFVELINSEYEKIVEIGLKSAGREYIKLFFIQFILGNFSKESIIQTIDEYKLPPIPKEIEDFFFVYNYQMCDFVKLTEIKPRYLNEISKINIYPIGQVSIERRNELGRGGNGTVYSGVLKEIDSQGNEISIPVAIKIPTQFYKSKLVEVYKELAIHQKINGICGPKLFGCVKLNVGFGIIIERFDCSLHDYIQNNNIDFDLFFELALKMVITIRNLHKCHLNEIFHRDIKPHNWLVKKTKDELVVVLSDFGLSRENSETNENTLQKYRGTSVFIPPELNDNILYNEKSDIYSLGVSFMMLLYKVVYGKMENPFYEFKISKMEYFKTVVALENFLVPIVPTFLPDSFKEFLFSTMNRIYTCRPNSEECVERLITLKTEYENDKTKWQVNSAIIQKEKSLLTDSIISQQLKLMNQVKKFVQENDKFVFLKKTKLFFSESEIKQYLLSIIKCQE.

Residues 312-586 (IERRNELGRG…EECVERLITL (275 aa)) form the Protein kinase domain. ATP is bound by residues 318–326 (LGRGGNGTV) and K348. D440 functions as the Proton acceptor in the catalytic mechanism.

This sequence belongs to the protein kinase superfamily. Ser/Thr protein kinase family.

The catalysed reaction is L-seryl-[protein] + ATP = O-phospho-L-seryl-[protein] + ADP + H(+). It catalyses the reaction L-threonyl-[protein] + ATP = O-phospho-L-threonyl-[protein] + ADP + H(+). The polypeptide is Probable serine/threonine-protein kinase DDB_G0283301 (Dictyostelium discoideum (Social amoeba)).